A 469-amino-acid polypeptide reads, in one-letter code: Ribulose bisphosphate carboxylase large chain (469 aa).

The residue at position 7 (lysine 7) is an N6,N6,N6-trimethyllysine. Substrate-binding residues include asparagine 116 and threonine 166. Residue lysine 168 is the Proton acceptor of the active site. Lysine 170 contributes to the substrate binding site. Positions 194, 196, and 197 each coordinate Mg(2+). Lysine 194 bears the N6-carboxylysine mark. The Proton acceptor role is filled by histidine 287. Arginine 288, histidine 320, and serine 372 together coordinate substrate.

The protein belongs to the RuBisCO large chain family. Type I subfamily. Heterohexadecamer of 8 large chains and 8 small chains; disulfide-linked. The disulfide link is formed within the large subunit homodimers. Mg(2+) serves as cofactor. In terms of processing, the disulfide bond which can form in the large chain dimeric partners within the hexadecamer appears to be associated with oxidative stress and protein turnover.

It localises to the plastid. It is found in the chloroplast. It carries out the reaction 2 (2R)-3-phosphoglycerate + 2 H(+) = D-ribulose 1,5-bisphosphate + CO2 + H2O. The catalysed reaction is D-ribulose 1,5-bisphosphate + O2 = 2-phosphoglycolate + (2R)-3-phosphoglycerate + 2 H(+). Functionally, ruBisCO catalyzes two reactions: the carboxylation of D-ribulose 1,5-bisphosphate, the primary event in carbon dioxide fixation, as well as the oxidative fragmentation of the pentose substrate in the photorespiration process. Both reactions occur simultaneously and in competition at the same active site. This is Ribulose bisphosphate carboxylase large chain from Pachira aquatica (Guiana chestnut).